A 509-amino-acid polypeptide reads, in one-letter code: ATP synthase subunit alpha (509 aa).

G171–T178 contributes to the ATP binding site.

This sequence belongs to the ATPase alpha/beta chains family. F-type ATPases have 2 components, CF(1) - the catalytic core - and CF(0) - the membrane proton channel. CF(1) has five subunits: alpha(3), beta(3), gamma(1), delta(1), epsilon(1). CF(0) has three main subunits: a(1), b(2) and c(9-12). The alpha and beta chains form an alternating ring which encloses part of the gamma chain. CF(1) is attached to CF(0) by a central stalk formed by the gamma and epsilon chains, while a peripheral stalk is formed by the delta and b chains.

It is found in the cell inner membrane. The catalysed reaction is ATP + H2O + 4 H(+)(in) = ADP + phosphate + 5 H(+)(out). Its function is as follows. Produces ATP from ADP in the presence of a proton gradient across the membrane. The alpha chain is a regulatory subunit. This is ATP synthase subunit alpha from Ehrlichia chaffeensis (strain ATCC CRL-10679 / Arkansas).